Consider the following 129-residue polypeptide: Glycine cleavage system H protein (129 aa).

A Lipoyl-binding domain is found at 24–106; the sequence is TFTVGISEHA…YGDGWLFRIK (83 aa). K65 carries the post-translational modification N6-lipoyllysine.

The protein belongs to the GcvH family. In terms of assembly, the glycine cleavage system is composed of four proteins: P, T, L and H. (R)-lipoate serves as cofactor.

Its function is as follows. The glycine cleavage system catalyzes the degradation of glycine. The H protein shuttles the methylamine group of glycine from the P protein to the T protein. The chain is Glycine cleavage system H protein from Idiomarina loihiensis (strain ATCC BAA-735 / DSM 15497 / L2-TR).